A 564-amino-acid polypeptide reads, in one-letter code: Potassium-transporting ATPase potassium-binding subunit (564 aa).

Helical transmembrane passes span 4-24 (YDYL…PWLG), 67-87 (TLAL…VLLL), 135-155 (IGLT…LVAL), 179-199 (LYGL…QGVP), 258-278 (FEVA…GHYV), 286-306 (AIIA…LWSE), 382-402 (AGLY…GLMI), 420-440 (LLVA…AIAA), 487-507 (VMIG…VLAL), and 534-554 (LLLL…LALG).

This sequence belongs to the KdpA family. As to quaternary structure, the system is composed of three essential subunits: KdpA, KdpB and KdpC.

The protein resides in the cell inner membrane. Its function is as follows. Part of the high-affinity ATP-driven potassium transport (or Kdp) system, which catalyzes the hydrolysis of ATP coupled with the electrogenic transport of potassium into the cytoplasm. This subunit binds the periplasmic potassium ions and delivers the ions to the membrane domain of KdpB through an intramembrane tunnel. The sequence is that of Potassium-transporting ATPase potassium-binding subunit from Pseudomonas entomophila (strain L48).